Reading from the N-terminus, the 419-residue chain is DNA ligase (419 aa).

The interval Met1–Asn120 is NTD. Positions Thr121–Leu317 are AD domain. Lys151 (N6-AMP-lysine intermediate) is an active-site residue. The interval Lys318–Ile419 is OB domain.

Belongs to the ATP-dependent DNA ligase family.

The protein resides in the virion. The catalysed reaction is ATP + (deoxyribonucleotide)n-3'-hydroxyl + 5'-phospho-(deoxyribonucleotide)m = (deoxyribonucleotide)n+m + AMP + diphosphate.. Functionally, very low-fidelity DNA ligase that seals nicks in double-stranded DNA during DNA repair. Together with the viral repair DNA polymerase X, fills the single nucleotide gaps generated by the AP endonuclease. It is not essential for viral replication and recombination. Displays a very low adenylation activity towards DNA with 3'-dideoxy- or 3'-amino-terminated nicks compared to regular nick DNA. This Ornithodoros (relapsing fever ticks) protein is DNA ligase.